The primary structure comprises 664 residues: DNA ligase (664 aa).

Residues 32-36 and 80-81 contribute to the NAD(+) site; these read DKEYD and SL. The N6-AMP-lysine intermediate role is filled by Lys122. Arg144, Glu178, and Lys314 together coordinate NAD(+). Residues Cys407, Cys410, Cys423, and Cys429 each contribute to the Zn(2+) site. One can recognise a BRCT domain in the interval 587-664; it reads IDENPFMGKT…NEEEFSNKIK (78 aa).

This sequence belongs to the NAD-dependent DNA ligase family. LigA subfamily. The cofactor is Mg(2+). It depends on Mn(2+) as a cofactor.

The catalysed reaction is NAD(+) + (deoxyribonucleotide)n-3'-hydroxyl + 5'-phospho-(deoxyribonucleotide)m = (deoxyribonucleotide)n+m + AMP + beta-nicotinamide D-nucleotide.. Functionally, DNA ligase that catalyzes the formation of phosphodiester linkages between 5'-phosphoryl and 3'-hydroxyl groups in double-stranded DNA using NAD as a coenzyme and as the energy source for the reaction. It is essential for DNA replication and repair of damaged DNA. The chain is DNA ligase from Clostridium botulinum (strain 657 / Type Ba4).